The primary structure comprises 474 residues: Sialyltransferase-like protein 1 (474 aa).

Residues 1 to 14 are Cytoplasmic-facing; it reads MRSHQAGRKLPLLQ. Residues 15-35 form a helical; Signal-anchor for type II membrane protein membrane-spanning segment; it reads LLGCVAVFSVFVFTIQSSFFA. Residues 36 to 474 lie on the Lumenal side of the membrane; sequence DNNRKLDLQP…CVRHPLKLDT (439 aa). N-linked (GlcNAc...) asparagine glycans are attached at residues Asn88, Asn120, Asn155, and Asn243. The segment at 376–421 is disordered; sequence RLQRSQQPTSSKRDGSGQFGNCKVWGDADPTKGPVSGSPDMSETRK.

The protein belongs to the glycosyltransferase 29 family. Highly expressed in inflorescences and siliques and at lower levels in roots, leaves and stems.

Its subcellular location is the golgi apparatus membrane. Required for normal pollen grain germination and pollen tube growth. May not be required for pollen development and female gametophytic function. The sequence is that of Sialyltransferase-like protein 1 from Arabidopsis thaliana (Mouse-ear cress).